The chain runs to 560 residues: Arginine--tRNA ligase (560 aa).

The short motif at alanine 135 to asparagine 145 is the 'HIGH' region element.

It belongs to the class-I aminoacyl-tRNA synthetase family. Monomer.

The protein localises to the cytoplasm. It catalyses the reaction tRNA(Arg) + L-arginine + ATP = L-arginyl-tRNA(Arg) + AMP + diphosphate. The chain is Arginine--tRNA ligase from Moorella thermoacetica (strain ATCC 39073 / JCM 9320).